Consider the following 617-residue polypeptide: MIYDGIIVGAGHAGVEAALAMAKMKLNTLLITGDLTKVATLPCNPSIGGPAKGIVVREIDALGGQMAKSADLSQIQMKMLNPSKGPAVRALRAQIDKLKYPKVMLDVLQNTPNLTLLQGFVDTLIVEDNTVKGVNLEDGSQVFAQTVIITTGTYLGSQILIGHEKTSSGPNGERTTRGISNQLKNLGFEMLRLKTGTPPRIARDSIDYSKTVPQPGDGVFQTFSHDSPITDLGHQEFSYLIHTSPDTKDIIFNNLDASAMYGGVVEGVGPRYCPSIEDKFVRFKDKDRHQIFIEPESMDLNEMYIQGLSTSMPKHIQEQMVRSLPGMENARIVRYAYAIEYDAINPRQLYQSLETKVIHNLFCAGQINGTSGYEEAAGQGLMAGINAGLKVQGKKPLVLKRDEAYIGVLIDDLITKGTSEPYRLLTSRAEHRLLLRNDNADIRLRDYGYQIGLVDDATYERFEHKKIALKEMIERAKSTKINPTEENLNYLASVNSSPIYEGVTVFKLLERPELKIETLKHFLPSDYNHEIYEQLEIYIKYDGYIEKARREADKLLRYESRFIPNDINYHSIHNISAEAKEKLSKIKPETLGQATRILGVGPTDVSMLLVYLEAKNA.

FAD-binding positions include 9–14, Val121, and Thr176; that span reads GAGHAG. Residue 269–283 participates in NAD(+) binding; the sequence is GPRYCPSIEDKFVRF. Gln366 serves as a coordination point for FAD.

This sequence belongs to the MnmG family. As to quaternary structure, homodimer. Heterotetramer of two MnmE and two MnmG subunits. It depends on FAD as a cofactor.

The protein localises to the cytoplasm. In terms of biological role, NAD-binding protein involved in the addition of a carboxymethylaminomethyl (cmnm) group at the wobble position (U34) of certain tRNAs, forming tRNA-cmnm(5)s(2)U34. The chain is tRNA uridine 5-carboxymethylaminomethyl modification enzyme MnmG from Acholeplasma laidlawii (strain PG-8A).